We begin with the raw amino-acid sequence, 247 residues long: 1-(5-phosphoribosyl)-5-[(5-phosphoribosylamino)methylideneamino] imidazole-4-carboxamide isomerase (247 aa).

Residue D8 is the Proton acceptor of the active site. The active-site Proton donor is D131.

It belongs to the HisA/HisF family.

The protein resides in the cytoplasm. It carries out the reaction 1-(5-phospho-beta-D-ribosyl)-5-[(5-phospho-beta-D-ribosylamino)methylideneamino]imidazole-4-carboxamide = 5-[(5-phospho-1-deoxy-D-ribulos-1-ylimino)methylamino]-1-(5-phospho-beta-D-ribosyl)imidazole-4-carboxamide. Its pathway is amino-acid biosynthesis; L-histidine biosynthesis; L-histidine from 5-phospho-alpha-D-ribose 1-diphosphate: step 4/9. The chain is 1-(5-phosphoribosyl)-5-[(5-phosphoribosylamino)methylideneamino] imidazole-4-carboxamide isomerase from Ralstonia pickettii (strain 12J).